Consider the following 43-residue polypeptide: Protein PsbN (43 aa).

A helical membrane pass occupies residues 7 to 27 (LIIFIASLLLGLTGYSIYTAF).

It belongs to the PsbN family.

It is found in the plastid. The protein localises to the chloroplast thylakoid membrane. Functionally, may play a role in photosystem I and II biogenesis. This chain is Protein PsbN, found in Guillardia theta (Cryptophyte).